Here is a 363-residue protein sequence, read N- to C-terminus: Aminomethyltransferase (363 aa).

Belongs to the GcvT family. As to quaternary structure, the glycine cleavage system is composed of four proteins: P, T, L and H.

It carries out the reaction N(6)-[(R)-S(8)-aminomethyldihydrolipoyl]-L-lysyl-[protein] + (6S)-5,6,7,8-tetrahydrofolate = N(6)-[(R)-dihydrolipoyl]-L-lysyl-[protein] + (6R)-5,10-methylene-5,6,7,8-tetrahydrofolate + NH4(+). Functionally, the glycine cleavage system catalyzes the degradation of glycine. The chain is Aminomethyltransferase from Teredinibacter turnerae (strain ATCC 39867 / T7901).